We begin with the raw amino-acid sequence, 242 residues long: Histone-lysine N-methyltransferase set-1 (242 aa).

The disordered stretch occupies residues 1-61 (MKVAAKKLAT…TRSRKGVSVK (61 aa)). Residues 30–43 (SENPSSLASHSSSS) show a composition bias toward low complexity. The SET domain maps to 104–226 (RLLEVYKDVV…QGEELLYDYG (123 aa)). S-adenosyl-L-methionine-binding positions include 114–116 (KGR), Y159, and 186–187 (NH).

It belongs to the class V-like SAM-binding methyltransferase superfamily. Histone-lysine methyltransferase family. PR/SET subfamily. In terms of tissue distribution, in embryos, it is expressed ubiquitously. In late embryos, it is expressed in hypodermal seam cells. In L3 and L4 larvae and thereafter, it is expressed in vulval precursor cells. In adult males, it is also expressed in 6 unidentified posterior cells.

It is found in the nucleus. It localises to the chromosome. It carries out the reaction L-lysyl(20)-[histone H4] + S-adenosyl-L-methionine = N(6)-methyl-L-lysyl(20)-[histone H4] + S-adenosyl-L-homocysteine + H(+). Functionally, histone methyltransferase that specifically monomethylates 'Lys-20' of histone H4 (H4K20me1). H4K20me1 is enriched on hermaphrodite X chromosomes and during mitosis. Involved in dosage compensation by repression of X-linked gene expression in hermaphrodites. Plays a role in growth and body fat regulation downstream of the TOR complex 2 pathway. In Caenorhabditis elegans, this protein is Histone-lysine N-methyltransferase set-1 (set-1).